The chain runs to 227 residues: 2,3-bisphosphoglycerate-dependent phosphoglycerate mutase (227 aa).

Residues 7 to 14 (RHGLSEWN), 20 to 21 (TG), R59, 86 to 89 (ERHY), K97, 113 to 114 (RR), and 182 to 183 (GN) contribute to the substrate site. H8 (tele-phosphohistidine intermediate) is an active-site residue. The active-site Proton donor/acceptor is the E86.

It belongs to the phosphoglycerate mutase family. BPG-dependent PGAM subfamily. In terms of assembly, homodimer.

The enzyme catalyses (2R)-2-phosphoglycerate = (2R)-3-phosphoglycerate. The protein operates within carbohydrate degradation; glycolysis; pyruvate from D-glyceraldehyde 3-phosphate: step 3/5. Its function is as follows. Catalyzes the interconversion of 2-phosphoglycerate and 3-phosphoglycerate. This chain is 2,3-bisphosphoglycerate-dependent phosphoglycerate mutase, found in Mannheimia succiniciproducens (strain KCTC 0769BP / MBEL55E).